The following is a 570-amino-acid chain: Auxin efflux carrier component 6 (570 aa).

Residues 1-6 (MITGNE) are Extracellular-facing. The chain crosses the membrane as a helical span at residues 7 to 27 (FYTVMCAMAPLYFAMFVAYGS). Residues 28-38 (VKWCKIFTPAQ) lie on the Cytoplasmic side of the membrane. A helical membrane pass occupies residues 39 to 59 (CSGINRFVSVFAVPVLSFHFI). Valine 51 contributes to the (indol-3-yl)acetate binding site. Over 60 to 70 (SQNNPYKMDTM) the chain is Extracellular. A helical membrane pass occupies residues 71-91 (FILADTLSKIFVFVLLSLWAV). At 92 to 100 (FFKAGGLDW) the chain is on the cytoplasmic side. A helical membrane pass occupies residues 101-121 (LITLFSIATLPNTLVMGIPLL). Asparagine 112 and leucine 114 together coordinate (indol-3-yl)acetate. Residues 122–131 (QAMYGDYTQT) lie on the Extracellular side of the membrane. Residues 132–152 (LMVQLVVLQCIIWYTLLLFLF) form a helical membrane-spanning segment. Tyrosine 145 contributes to the (indol-3-yl)acetate binding site. Residues 153-430 (ELRAARLLIR…LSRNPNTYSS (278 aa)) lie on the Cytoplasmic side of the membrane. A phosphoserine mark is found at serine 230 and serine 308. A helical membrane pass occupies residues 431–451 (LLGLVWSLISFKWNIPMPNIV). The Extracellular segment spans residues 452 to 454 (DFS). The chain crosses the membrane as a helical span at residues 455-475 (IKIISDAGLGMAMFSLGLFMA). At 476–491 (LQPKMIPCGAKKATMG) the chain is on the cytoplasmic side. The chain crosses the membrane as a helical span at residues 492-512 (MLIRFISGPLFMAGASLLVGL). The Extracellular portion of the chain corresponds to 513–515 (RGS). A helical membrane pass occupies residues 516–536 (RLHAAIVQAALPQGIVPFVFA). 2 residues coordinate (indol-3-yl)acetate: isoleucine 530 and valine 531. The Cytoplasmic portion of the chain corresponds to 537–549 (REYNLHPDLLSTL). Residues 550–570 (VIFGMIVSLPVTILYYVLLGL) form a helical membrane-spanning segment.

This sequence belongs to the auxin efflux carrier (TC 2.A.69.1) family. Homodimer. As to expression, expressed in the vasculature of the primary root, cotyledons, floral stem, sepals and the main transmitting tract of the reproductive silique. Expressed in embryos, shoot meristem, root tip and lateral root meristems. Expressed in the nectaries and the floral organ boundaries of the anthers. Detected in pollen. Expressed in broad subepidermal domains that narrowed to sites of vein formation. Expressed in veins of mature leaves.

It localises to the endoplasmic reticulum membrane. Component of the intracellular auxin-transport pathway. Regulates auxin transport and auxin homeostasis. Directly involved in the regulation of nectar production. Involved in unfolded protein response (UPR) activation. Involved in the control of vein patterning. Redundantly with PIN8, inhibits the vein-formation-promoting functions of PIN5. PIN5, PIN6, and PIN8 control vein network geometry, but they are expressed in mutually exclusive domains of leaf vascular cells. The polypeptide is Auxin efflux carrier component 6 (Arabidopsis thaliana (Mouse-ear cress)).